The following is a 208-amino-acid chain: GATA transcription factor 29 (208 aa).

The segment at 155-208 (GMKKCTNMNCNALNTPMWRRGPLGPKSLCNACGIKFRKEEERKAKRNVVIVLDD) adopts a GATA-type; atypical zinc-finger fold.

It belongs to the type IV zinc-finger family. Class B subfamily.

The protein localises to the nucleus. Functionally, transcriptional regulator that specifically binds 5'-GATA-3' or 5'-GAT-3' motifs within gene promoters. This chain is GATA transcription factor 29 (GATA29), found in Arabidopsis thaliana (Mouse-ear cress).